The sequence spans 241 residues: Protein McbE (241 aa).

Transmembrane regions (helical) follow at residues 17–35 (TPFS…FFFL), 54–72 (ISWF…NYCL), 105–123 (LIMS…LTGF), 131–149 (IVMI…MVSL), 163–181 (STIY…IVSL), and 212–230 (LMTI…ISAL).

It is found in the cell membrane. In terms of biological role, together with two further proteins McbF and McbG this protein causes immunity to the peptide antibiotic microcin B17 (MccB17), which inhibits DNA replication in enterobacteriaceae. Immunity is determined by two different mechanisms. McbE is involved in the production of extracellular MccB17 and, in a complex with McbF it also serves as 'pump' for the export of active MccB17 from the cytoplasm to the periplasmic space. This chain is Protein McbE (mcbE), found in Escherichia coli.